The primary structure comprises 78 residues: Protein M6 (78 aa).

Belongs to the A9/FIL1 family. As to expression, tapetum of anthers.

It is found in the secreted. This Lilium henryi (Henry's lily) protein is Protein M6 (M6).